Consider the following 234-residue polypeptide: Preflagellin peptidase (234 aa).

M1 is a topological domain (cytoplasmic). A helical membrane pass occupies residues 2–18 (INFIVGAIGLLIASIYD). Topologically, residues 19-23 (LKSRE) are extracellular. A helical transmembrane segment spans residues 24-46 (IEDYVWVSMVIFGLIYNGYLSFI). Topologically, residues 47 to 49 (SHD) are cytoplasmic. The chain crosses the membrane as a helical span at residues 50-72 (MLYVIQSIVGFIVCFFLGFFMFL). Over 73-78 (LGVGGG) the chain is Extracellular. A helical transmembrane segment spans residues 79 to 89 (DGKLIMGLGAL). The Cytoplasmic portion of the chain corresponds to 90 to 110 (IPKYNMPIHTPLGAILNYLYL). The helical transmembrane segment at 111–139 (PSFPIMVVINAMFFSITLPIIIFLRNVIR) threads the bilayer. The Extracellular segment spans residues 140-205 (GVKPKTKKEV…EEIWVTPAIP (66 aa)). Residues 206–217 (FVVPIFLSYLLT) traverse the membrane as a helical segment. Topologically, residues 218 to 234 (SIIGDKIIGIFLSVFGL) are cytoplasmic.

It belongs to the peptidase A24 family. Archaeal preflagellin peptidase subfamily.

It localises to the cell membrane. It carries out the reaction Cleaves the signal peptide of 3 to 12 amino acids from the N-terminal of preflagellin, usually at Arg-Gly-|- or Lys-Gly-|-, to release flagellin.. In terms of biological role, cleaves the N-terminal leader peptide from preflagellins. The chain is Preflagellin peptidase (flaK) from Methanocaldococcus jannaschii (strain ATCC 43067 / DSM 2661 / JAL-1 / JCM 10045 / NBRC 100440) (Methanococcus jannaschii).